A 214-amino-acid chain; its full sequence is Shikimate kinase (214 aa).

Residue 35-40 (GAGKST) participates in ATP binding. Serine 39 is a binding site for Mg(2+). Positions 57, 81, and 103 each coordinate substrate. Arginine 141 contacts ATP. Substrate is bound at residue arginine 160.

Belongs to the shikimate kinase family. As to quaternary structure, monomer. The cofactor is Mg(2+).

The protein localises to the cytoplasm. The enzyme catalyses shikimate + ATP = 3-phosphoshikimate + ADP + H(+). Its pathway is metabolic intermediate biosynthesis; chorismate biosynthesis; chorismate from D-erythrose 4-phosphate and phosphoenolpyruvate: step 5/7. In terms of biological role, catalyzes the specific phosphorylation of the 3-hydroxyl group of shikimic acid using ATP as a cosubstrate. The polypeptide is Shikimate kinase (Nitrobacter winogradskyi (strain ATCC 25391 / DSM 10237 / CIP 104748 / NCIMB 11846 / Nb-255)).